A 326-amino-acid chain; its full sequence is Aldo-keto reductase family 1 member D1 (326 aa).

NADP(+) is bound by residues 22–26 and Asp53; that span reads GLGTY. Substrate is bound at residue Tyr26. The substrate site is built by Tyr58, Trp89, Glu120, and Tyr132. The active-site Proton donor is Tyr58. NADP(+) is bound by residues 169 to 170, Gln193, and 219 to 224; these read SN and YSPLGT. Trp230 serves as a coordination point for substrate. 273–283 provides a ligand contact to NADP(+); the sequence is KSFNPERIKEN.

This sequence belongs to the aldo/keto reductase family.

It is found in the cytoplasm. The catalysed reaction is 5beta-cholestan-3-one + NADP(+) = cholest-4-en-3-one + NADPH + H(+). The enzyme catalyses 4,5beta-dihydrocortisone + NADP(+) = cortisone + NADPH + H(+). It carries out the reaction cortisol + NADPH + H(+) = 5beta-dihydrocortisol + NADP(+). It catalyses the reaction corticosterone + NADPH + H(+) = 5beta-dihydrocorticosterone + NADP(+). The catalysed reaction is 7alpha,12alpha-dihydroxycholest-4-en-3-one + NADPH + H(+) = 7alpha,12alpha-dihydroxy-5beta-cholestan-3-one + NADP(+). The enzyme catalyses 7alpha-hydroxycholest-4-en-3-one + NADPH + H(+) = 7alpha-hydroxy-5beta-cholestan-3-one + NADP(+). It carries out the reaction epitestosterone + NADPH + H(+) = 5beta-dihydroepitestosterone + NADP(+). It catalyses the reaction androst-4-ene-3,17-dione + NADPH + H(+) = 5beta-androstane-3,17-dione + NADP(+). The catalysed reaction is progesterone + NADPH + H(+) = 5beta-pregnan-3,20-dione + NADP(+). The enzyme catalyses 21-hydroxyprogesterone + NADPH + H(+) = 5beta-dihydrodeoxycorticosterone + NADP(+). It carries out the reaction aldosterone + NADPH + H(+) = 5beta-dihydroaldosterone + NADP(+). It catalyses the reaction 17beta-hydroxyandrosta-1,4-dien-3-one + NADPH + H(+) = 17beta-hydroxy-5beta-androst-1-en-3-one + NADP(+). The catalysed reaction is 17beta-hydroxyestr-4-en-3-one + NADPH + H(+) = 17beta-hydroxy-5beta-estran-3-one + NADP(+). The enzyme catalyses 5beta-dihydrotestosterone + NADP(+) = testosterone + NADPH + H(+). It carries out the reaction androst-4-ene-3,11,17-trione + NADPH + H(+) = 17beta-hydroxyandrost-4-ene-3,11-dione + NADP(+). Subject to inhibition by high substrate concentrations. Inhibited by testosterone concentrations above 10 uM. Inhibited by the primary and secondary bile acids chenodeoxycholic acid and ursodeoxycholic acid. Its function is as follows. Catalyzes the stereospecific NADPH-dependent reduction of the C4-C5 double bond of bile acid intermediates and steroid hormones carrying a delta(4)-3-one structure to yield an A/B cis-ring junction. This cis-configuration is crucial for bile acid biosynthesis and plays important roles in steroid metabolism. Capable of reducing a broad range of delta-(4)-3-ketosteroids from C18 (such as, 17beta-hydroxyestr-4-en-3-one) to C27 (such as, 7alpha-hydroxycholest-4-en-3-one). The chain is Aldo-keto reductase family 1 member D1 (AKR1D1) from Oryctolagus cuniculus (Rabbit).